The following is a 186-amino-acid chain: Ribosome-recycling factor (186 aa).

The protein belongs to the RRF family.

It is found in the cytoplasm. Responsible for the release of ribosomes from messenger RNA at the termination of protein biosynthesis. May increase the efficiency of translation by recycling ribosomes from one round of translation to another. This Endomicrobium trichonymphae protein is Ribosome-recycling factor.